The sequence spans 196 residues: uncharacterized protein (196 aa).

A helical transmembrane segment spans residues 11-31 (ICGFLLVILTIGGVLGGVYLV).

Its subcellular location is the membrane. This is an uncharacterized protein from Mycoplasma genitalium (strain ATCC 33530 / DSM 19775 / NCTC 10195 / G37) (Mycoplasmoides genitalium).